We begin with the raw amino-acid sequence, 482 residues long: FAD-dependent monooxygenase esdpE (482 aa).

Residues 1–21 (MGAERLKVIIVGGSIAGLTLA) form the signal peptide. 2 residues coordinate FAD: E35 and R108. Residue N243 is glycosylated (N-linked (GlcNAc...) asparagine). 2 residues coordinate FAD: D308 and A321. A helical membrane pass occupies residues 440–460 (LFSGSLLLIMSVALLFGVICW).

Belongs to the paxM FAD-dependent monooxygenase family. Requires FAD as cofactor.

It localises to the membrane. It participates in secondary metabolite biosynthesis; terpenoid biosynthesis. Its function is as follows. FAD-dependent monooxygenase; part of the cluster that mediates the biosynthesis of shearones, diterpenoid pyrones (DPs) which are structurally diverse meroterpenoids consisting of a diterpene linked by a pyrone, and which may exhibit a range of bioactivities. Within the pathway, esdpE takes part to the biosynthesis of the molecular scaffold by catalyzing the formation of an (S)-epoxide ring at the terminal olefin of the geranylgeranyl group. The molecular scaffold is commonly biosynthesized by a series of enzymes including the non-reducing polyketide synthase (NR-PKS) esdpA that generates an alpha-pyrone; the prenyltransferase esdpC that attaches a geranylgeranyl pyrophosphate (GGPP) produced by the GGPP synthase (GGPPS) esdpD onto the pyrone unit; the FAD-dependent monooxygenase esdpE that converts an olefin on the diterpene unit into an epoxide; and the terpene cyclase esdpB that catalyzes the cyclization reactions to give the molecular backbone shearone A. In the modification steps, esdpF oxidizes the hydroxy group to a ketone at C-3 and esdpG then attaches hydroxy groups at both C-11 and C-12. After that, esdpI hydroxylates at C-20 and esdpH hydroxylates at C-6'. The ether bridge is generated by nucleophilic attack of the hydroxy group at C-20 to the carbonyl carbon at C-3. EsdpH can also functions prior to esdpI. The different combinations of these modification enzymes lead to the production of diverse shearone derivatives, shearone I being the end product of the pathway. The alpha-ketoglutarate-dependent dioxygenase esdpJ seems not to be involved in this pathway. The chain is FAD-dependent monooxygenase esdpE from Penicillium shearii (Eupenicillium shearii).